The sequence spans 448 residues: Porin AaxA (448 aa).

Residues 1–24 (MASFRSSLLSALCAYGMMVMPAYA) form the signal peptide.

It belongs to the OprB family.

It localises to the cell outer membrane. Functionally, facilitates L-arginine uptake, as part of the AaxABC system. The arginine uptake by the bacterium in the macrophage may be a virulence factor against the host innate immune response. The polypeptide is Porin AaxA (aaxA) (Chlamydia abortus (strain DSM 27085 / S26/3) (Chlamydophila abortus)).